A 338-amino-acid chain; its full sequence is Protein-glutamate methylesterase/protein-glutamine glutaminase 2 (338 aa).

The 118-residue stretch at 2–119 folds into the Response regulatory domain; sequence RIGIVNDSAL…SDTKLAAGPL (118 aa). A 4-aspartylphosphate modification is found at Asp-53. In terms of domain architecture, CheB-type methylesterase spans 145-330; that stretch reads PTPTAPRLVA…PLQKIAPRLV (186 aa). Catalysis depends on residues Ser-158, His-185, and Asp-278.

This sequence belongs to the CheB family. Phosphorylated by CheA. Phosphorylation of the N-terminal regulatory domain activates the methylesterase activity.

The protein resides in the cytoplasm. It carries out the reaction [protein]-L-glutamate 5-O-methyl ester + H2O = L-glutamyl-[protein] + methanol + H(+). It catalyses the reaction L-glutaminyl-[protein] + H2O = L-glutamyl-[protein] + NH4(+). Functionally, involved in chemotaxis. Part of a chemotaxis signal transduction system that modulates chemotaxis in response to various stimuli. Catalyzes the demethylation of specific methylglutamate residues introduced into the chemoreceptors (methyl-accepting chemotaxis proteins or MCP) by CheR. Also mediates the irreversible deamidation of specific glutamine residues to glutamic acid. In Cupriavidus metallidurans (strain ATCC 43123 / DSM 2839 / NBRC 102507 / CH34) (Ralstonia metallidurans), this protein is Protein-glutamate methylesterase/protein-glutamine glutaminase 2.